Consider the following 200-residue polypeptide: Holliday junction branch migration complex subunit RuvA (200 aa).

The segment at 1–63 (MIALVQGRVA…EDSLTLFGFA (63 aa)) is domain I. A domain II region spans residues 64–138 (DADERDVFEL…DRLGPAQGAA (75 aa)). Residues 138-142 (APAAP) are flexible linker. The tract at residues 143–200 (VAVDDGADVVDALVGLGWPVRQAQDAVRGVLEDADGTAPDAAGLLRAALRSLAGDARG) is domain III.

It belongs to the RuvA family. Homotetramer. Forms an RuvA(8)-RuvB(12)-Holliday junction (HJ) complex. HJ DNA is sandwiched between 2 RuvA tetramers; dsDNA enters through RuvA and exits via RuvB. An RuvB hexamer assembles on each DNA strand where it exits the tetramer. Each RuvB hexamer is contacted by two RuvA subunits (via domain III) on 2 adjacent RuvB subunits; this complex drives branch migration. In the full resolvosome a probable DNA-RuvA(4)-RuvB(12)-RuvC(2) complex forms which resolves the HJ.

It localises to the cytoplasm. Its function is as follows. The RuvA-RuvB-RuvC complex processes Holliday junction (HJ) DNA during genetic recombination and DNA repair, while the RuvA-RuvB complex plays an important role in the rescue of blocked DNA replication forks via replication fork reversal (RFR). RuvA specifically binds to HJ cruciform DNA, conferring on it an open structure. The RuvB hexamer acts as an ATP-dependent pump, pulling dsDNA into and through the RuvAB complex. HJ branch migration allows RuvC to scan DNA until it finds its consensus sequence, where it cleaves and resolves the cruciform DNA. In Beutenbergia cavernae (strain ATCC BAA-8 / DSM 12333 / CCUG 43141 / JCM 11478 / NBRC 16432 / NCIMB 13614 / HKI 0122), this protein is Holliday junction branch migration complex subunit RuvA.